Consider the following 353-residue polypeptide: Chloroplastic lipocalin (353 aa).

A compositionally biased stretch (low complexity) spans 1–18 (MILLSSSISLSRPVSSQS). Residues 1–27 (MILLSSSISLSRPVSSQSFSPPAATST) are disordered. A chloroplast-targeting transit peptide spans 1-39 (MILLSSSISLSRPVSSQSFSPPAATSTRRSHSSVTVKCC). A disulfide bridge links C163 with C299.

It belongs to the calycin superfamily. Lipocalin family. In terms of tissue distribution, expressed in leaves at low levels (at protein levels). Present in seeds.

It is found in the plastid. Its subcellular location is the chloroplast thylakoid lumen. Lipocalin that prevents thylakoidal membrane lipids peroxidation and confers protection against oxidative stress, especially mediated by singlet oxygen in response to high light and other stress (e.g. heat shocks). Required for seed longevity by ensuring polyunsaturated lipids integrity. This Arabidopsis thaliana (Mouse-ear cress) protein is Chloroplastic lipocalin.